Consider the following 906-residue polypeptide: MLKLSTNEIRKKWIEFFESKDHLFIEPKSLIPKNDPTLLWINSGVSTLKDYFSGKVKPPHKRLVNSQKAIRTNDIFNVGLTSRHHTFFEMLGNFSIGDYFKKEAIDWAYEFLINVLKIDVKKLWVTVFEDDQFTNDEWIKLGIIKEQIIKCNRDRNFWDVGNGPCGPCTEIHYDRGERFDPNKIGSKLILEDIENDRYVEIWNIVFSQFNNDGHNNYTELLQKNIDTGAGLERIACISQDVPTNFDSDVFMRITKSVEQFSEYKYDMNEYFHPNVTQNKINFAYKVIADHMRATVFAIADGAIPSNKERGYILRRLIRRTMVLVRRLNINNLLWVDAVVDAIASTMGDFYTYLKDEKTLTKIKMILNKEVQLFEKTLQLGLNIFENSIRNQELDKEITFKLVDTYGFPIELIKEICEQRNVKVDLEAFDAMFKHHQLISKANKANLKVMESQNESLMQLDVDSTFHYEIFRWENAKIITLFNEDFELVDGLDHEDGYVVFDNTCFYATSGGQQHDTGYIIKNDQQFFVDDVFKAPNRQHVHHVKNASLSMNEHVILQINEQDRKSITANHTAEHLLHYCLKHVLSPDIKQEGAAKYPHKVTFDFTYHAQPTKAQLDKLENVLNEMVQSNFDVQELHMDLDEAKAVGAAAYFEDVYKKLKGKLRVIKMGPSIELCGGTHAHHTSEIERIKIVECASKGAGSWRITMVTGHDNLAKYIHDLYVDYLNEINHLKVNLDINDHKLNDLYNAFANWKNLSIDDYDLLNEKFAELKQSLINFKIEFDKQNAKQAIIDIKNTFNTQLTNKRVHVFKNTDNKNIFNALNELINENQDTLFISFNLDDNKIQYLLAINEKFATTNQINLNKYIKELNTISNGKGGGKPYFVQGGTSEQEKLDELLTVVDKWVINA.

H570, H574, C674, and H678 together coordinate Zn(2+).

It belongs to the class-II aminoacyl-tRNA synthetase family. Zn(2+) is required as a cofactor.

It is found in the cytoplasm. The catalysed reaction is tRNA(Ala) + L-alanine + ATP = L-alanyl-tRNA(Ala) + AMP + diphosphate. Its function is as follows. Catalyzes the attachment of alanine to tRNA(Ala) in a two-step reaction: alanine is first activated by ATP to form Ala-AMP and then transferred to the acceptor end of tRNA(Ala). Also edits incorrectly charged Ser-tRNA(Ala) and Gly-tRNA(Ala) via its editing domain. In Ureaplasma parvum serovar 3 (strain ATCC 27815 / 27 / NCTC 11736), this protein is Alanine--tRNA ligase.